A 318-amino-acid polypeptide reads, in one-letter code: Putative olfactory receptor 2W6 (318 aa).

Residues 1-31 (MGFYHVGQAAFELLTSSFILVGFSDRPHLEL) lie on the Extracellular side of the membrane. Residues 32–52 (IVFVVVLIFYLLTLLGNMTIV) traverse the membrane as a helical segment. Residues 53–63 (LLSALDSRLHT) are Cytoplasmic-facing. The helical transmembrane segment at 64 to 84 (PMYFFLANLSFLDMCFTTGSI) threads the bilayer. The Extracellular segment spans residues 85–103 (PQMLYNLWGPDKTISYVGC). Cysteine 103 and cysteine 185 form a disulfide bridge. The helical transmembrane segment at 104–124 (AIQLYFVLALGGVECVLLAVM) threads the bilayer. Residues 125–145 (AYDRYAAVCKPLHYTIIMHPR) are Cytoplasmic-facing. A helical transmembrane segment spans residues 146–166 (LCGQLASVAWLSGFGNSLIMA). At 167 to 202 (PQTLMLPRCGHRRVDHFLCEMPALIGMACVDTMMLE) the chain is on the extracellular side. The chain crosses the membrane as a helical span at residues 203 to 223 (ALAFALAIFIILAPLILILIS). Topologically, residues 224–245 (YGYVGGTVLRIKSAAGRKKAFN) are cytoplasmic. A helical transmembrane segment spans residues 246-266 (TCSSHLIVVSLFYGTIIYMYL). Topologically, residues 267 to 277 (QPANTYSQDQG) are extracellular. The helical transmembrane segment at 278-298 (KFLTLFYTIVTPSVNPLIYTL) threads the bilayer. Residues 299-318 (RNKDVKEAMKKVLGKGSAEI) lie on the Cytoplasmic side of the membrane.

The protein belongs to the G-protein coupled receptor 1 family.

The protein localises to the cell membrane. In terms of biological role, odorant receptor. The protein is Putative olfactory receptor 2W6 (OR2W6P) of Homo sapiens (Human).